A 320-amino-acid chain; its full sequence is o-succinylbenzoate synthase (320 aa).

Catalysis depends on K133, which acts as the Proton donor. The Mg(2+) site is built by D161, E190, and D213. Residue K235 is the Proton acceptor of the active site.

It belongs to the mandelate racemase/muconate lactonizing enzyme family. MenC type 1 subfamily. A divalent metal cation is required as a cofactor.

It carries out the reaction (1R,6R)-6-hydroxy-2-succinyl-cyclohexa-2,4-diene-1-carboxylate = 2-succinylbenzoate + H2O. It functions in the pathway quinol/quinone metabolism; 1,4-dihydroxy-2-naphthoate biosynthesis; 1,4-dihydroxy-2-naphthoate from chorismate: step 4/7. Its pathway is quinol/quinone metabolism; menaquinone biosynthesis. Its function is as follows. Converts 2-succinyl-6-hydroxy-2,4-cyclohexadiene-1-carboxylate (SHCHC) to 2-succinylbenzoate (OSB). In Escherichia coli O17:K52:H18 (strain UMN026 / ExPEC), this protein is o-succinylbenzoate synthase.